We begin with the raw amino-acid sequence, 197 residues long: Guanylate kinase (197 aa).

A Guanylate kinase-like domain is found at 7–185; that stretch reads GLIIILSSPS…TLKKIHEIIV (179 aa). 14–21 is an ATP binding site; the sequence is SPSGTGKS.

Belongs to the guanylate kinase family.

It is found in the cytoplasm. It carries out the reaction GMP + ATP = GDP + ADP. Its function is as follows. Essential for recycling GMP and indirectly, cGMP. This chain is Guanylate kinase (gmk), found in Rickettsia prowazekii (strain Madrid E).